A 245-amino-acid chain; its full sequence is MSDEFSLADALPEHSPAKTSAVSNTKPGQPPQGWPGSNPWNNPSAPSSVPSGLPPSATPSTVPFGPAPTGMYPSVPPTGPPPGPPAPFPPSGPSCPPPGGPYPAPTVPGPGPTGPYPTPNMPFPELPRPYGAPTDPAAAGPLGPWGSMSSGPWAPGMGGQYPTPNMPYPSPGPYPAPPPPQAPGAAPPVPWGTVPPGAWGPPAPYPAPTGSYPTPGLYPTPSNPFQVPSGPSGAPPMPGGPHSYH.

The disordered stretch occupies residues 1–245 (MSDEFSLADA…PMPGGPHSYH (245 aa)). Residue S2 is modified to N-acetylserine. Phosphoserine occurs at positions 2, 6, and 15. A compositionally biased stretch (polar residues) spans 17–26 (AKTSAVSNTK). A compositionally biased stretch (low complexity) spans 34–51 (WPGSNPWNNPSAPSSVPS). Composition is skewed to pro residues over residues 74–127 (SVPP…PELP), 164–190 (PNMP…PPVP), and 198–207 (AWGPPAPYPA).

The protein belongs to the MISS family.

The protein is MAPK-interacting and spindle-stabilizing protein-like (MAPK1IP1L) of Homo sapiens (Human).